Reading from the N-terminus, the 160-residue chain is Cytochrome b6-f complex subunit 4 (160 aa).

Transmembrane regions (helical) follow at residues 36–56, 95–115, and 128–148; these read LLYIFPVVILGTFACLVGLAV, LLGIALQTLVPLGLMLIPFIE, and IAMAFFLFGTVITIYLGIGAC.

This sequence belongs to the cytochrome b family. PetD subfamily. As to quaternary structure, the 4 large subunits of the cytochrome b6-f complex are cytochrome b6, subunit IV (17 kDa polypeptide, PetD), cytochrome f and the Rieske protein, while the 4 small subunits are PetG, PetL, PetM and PetN. The complex functions as a dimer.

The protein resides in the cellular thylakoid membrane. Component of the cytochrome b6-f complex, which mediates electron transfer between photosystem II (PSII) and photosystem I (PSI), cyclic electron flow around PSI, and state transitions. The sequence is that of Cytochrome b6-f complex subunit 4 from Prochlorococcus marinus (strain MIT 9313).